Consider the following 334-residue polypeptide: HTH-type transcriptional repressor PurR (334 aa).

Residues 2 to 56 form the HTH lacI-type domain; sequence ATIKDVARLAGVSTTTVSHVINKTRFVAEATQEKVMKAVDELNYAPSAVARSLKC. Residues 4–23 constitute a DNA-binding region (H-T-H motif); the sequence is IKDVARLAGVSTTTVSHVIN. A DNA-binding region spans residues 48-56; sequence SAVARSLKC. The hypoxanthine site is built by Phe-73, Lys-189, Phe-220, and Asp-274.

As to quaternary structure, homodimer.

It participates in purine metabolism; purine nucleotide biosynthesis [regulation]. Is the main repressor of the genes involved in the de novo synthesis of purine nucleotides, regulating purB, purC, purEK, purF, purHD, purL, purMN and guaBA expression. PurR is allosterically activated to bind its cognate DNA by binding the purine corepressors, hypoxanthine or guanine, thereby effecting transcription repression. The sequence is that of HTH-type transcriptional repressor PurR from Vibrio parahaemolyticus serotype O3:K6 (strain RIMD 2210633).